The sequence spans 111 residues: Ig heavy chain V-III region HPC76 (111 aa).

Positions 1 to 110 constitute an Ig-like domain; sequence ESGGGLVQPG…WGQGTTLTVS (110 aa).

In Mus musculus (Mouse), this protein is Ig heavy chain V-III region HPC76.